A 229-amino-acid polypeptide reads, in one-letter code: Uracil-DNA glycosylase (229 aa).

The active-site Proton acceptor is aspartate 64.

This sequence belongs to the uracil-DNA glycosylase (UDG) superfamily. UNG family.

The protein localises to the cytoplasm. It carries out the reaction Hydrolyzes single-stranded DNA or mismatched double-stranded DNA and polynucleotides, releasing free uracil.. Excises uracil residues from the DNA which can arise as a result of misincorporation of dUMP residues by DNA polymerase or due to deamination of cytosine. The protein is Uracil-DNA glycosylase of Salmonella arizonae (strain ATCC BAA-731 / CDC346-86 / RSK2980).